The following is a 98-amino-acid chain: Small ribosomal subunit protein bS20 (98 aa).

Basic residues predominate over residues 1–15; it reads MAPKKTTKKGGPKKR. The disordered stretch occupies residues 1–21; that stretch reads MAPKKTTKKGGPKKRPSAEKR.

The protein belongs to the bacterial ribosomal protein bS20 family.

In terms of biological role, binds directly to 16S ribosomal RNA. In Chlamydia felis (strain Fe/C-56) (Chlamydophila felis), this protein is Small ribosomal subunit protein bS20.